Reading from the N-terminus, the 112-residue chain is MLVTTTERIPGQEYEVLGECFGVTTQSRDIISNFGAGLKNLVGGEIKGYTKMLTTSRQEAIDRLKEEAAAMGADAVVMMRFDSGSIASDMQSVVAYGTAVKFIEKIRVRPLT.

The protein belongs to the UPF0145 family.

The polypeptide is UPF0145 protein LAF_1635 (Limosilactobacillus fermentum (strain NBRC 3956 / LMG 18251) (Lactobacillus fermentum)).